A 349-amino-acid chain; its full sequence is MVRAKRKLDHIEYALSTGQSRTHGFHDIDFVHQSLPNSNYDTITCETKIGELSLSSPIFINAMTGGGGEKTLHINEQLAYVAKHHNLAMAVGSQMAALKDESEAASYKVIRKVNPNGIFFANLGSEATIEQAERAVDMIEANALQIHLNVIQELTMPEGDRDFTGVLQRIEKIVLNSKVPIIVKEVGFGMSKETMQQLVNVGVTAIDIGGQGGTNFAAVENERRQRMLSYFNNWGIQTATSIIEATSTNNNLSFIASGGIQTALDVAKAIALGANTTAFAGYFLRILMQDGIEKLLDEIELLHTDLKFIMTALGAKTIEELQSVPLVVKGETYHWLMQRGIDTAHYSRR.

A substrate-binding site is contributed by 6–7 (RK). FMN is bound by residues 62 to 64 (AMT), Ser-93, and Asn-122. Residue Gln-152 coordinates substrate. Glu-153 contributes to the Mg(2+) binding site. FMN contacts are provided by residues Lys-184, Thr-214, 258–259 (GG), and 280–281 (AG).

Belongs to the IPP isomerase type 2 family. Homooctamer. Dimer of tetramers. FMN serves as cofactor. Requires NADPH as cofactor. The cofactor is Mg(2+).

Its subcellular location is the cytoplasm. The enzyme catalyses isopentenyl diphosphate = dimethylallyl diphosphate. Functionally, involved in the biosynthesis of isoprenoids. Catalyzes the 1,3-allylic rearrangement of the homoallylic substrate isopentenyl (IPP) to its allylic isomer, dimethylallyl diphosphate (DMAPP). The protein is Isopentenyl-diphosphate delta-isomerase of Bacillus cereus (strain B4264).